The following is a 136-amino-acid chain: S-protein homolog 25 (136 aa).

The first 20 residues, 1 to 20 (MNHSVFVILITITYFGLNQA), serve as a signal peptide directing secretion. 2 N-linked (GlcNAc...) asparagine glycosylation sites follow: asparagine 71 and asparagine 84.

Belongs to the plant self-incompatibility (S1) protein family.

The protein resides in the secreted. The protein is S-protein homolog 25 of Arabidopsis thaliana (Mouse-ear cress).